The following is a 269-amino-acid chain: MAHISDIKLIRTDTTLDLSQKAEKGMIWTMGGASYLYYNAYDHGSLTCRCGTLLIASSGGKYNPIRTFSSHQILEATNNFDWSYAIGVDRFVWYKGTIENRAVLIKYYKGEPFNFDPDNFYRDIAVSSMMSSHKNVLKLLGCCLEFPRPVLVCEYPEKGALAYIGGAGEVIKPLAWSVRLKIAKEIADAVTYLHTEFPRTIIHRDLKLTNIFLDENWTAKLSSFSLSIPIPEGELGVEDIVCGTQGFGEPHYMENMDSIKNRLMVTVIT.

Positions 80–269 (FDWSYAIGVD…KNRLMVTVIT (190 aa)) constitute a Protein kinase domain. ATP-binding positions include 86-94 (IGVDRFVWY) and Lys-106. The active-site Proton acceptor is the Asp-205.

This sequence belongs to the protein kinase superfamily. Ser/Thr protein kinase family. ZRK subfamily.

It carries out the reaction L-seryl-[protein] + ATP = O-phospho-L-seryl-[protein] + ADP + H(+). It catalyses the reaction L-threonyl-[protein] + ATP = O-phospho-L-threonyl-[protein] + ADP + H(+). This Arabidopsis thaliana (Mouse-ear cress) protein is Serine/threonine-protein kinase ZRK7.